The primary structure comprises 427 residues: Ribosome biogenesis protein WDR12 homolog (427 aa).

Positions 13-97 (LQLHLYTKQK…EDTVELEYVE (85 aa)) are ubiquitin-like (UBL) domain. WD repeat units follow at residues 109-146 (LHDD…KLTI), 148-190 (GHIA…NSVE), 197-236 (GHER…DGDS), 260-298 (GHRE…IKSE), 301-339 (GHKS…GTIV), 345-385 (GHTQ…APIF), and 389-427 (GHED…GEQK).

The protein belongs to the WD repeat WDR12/YTM1 family.

The protein resides in the nucleus. The protein localises to the nucleolus. Its subcellular location is the nucleoplasm. Functionally, required for maturation of ribosomal RNAs and formation of the large ribosomal subunit. The chain is Ribosome biogenesis protein WDR12 homolog from Aedes aegypti (Yellowfever mosquito).